We begin with the raw amino-acid sequence, 287 residues long: Elongation factor Ts (287 aa).

Residues 80 to 83 (TDFL) form an involved in Mg(2+) ion dislocation from EF-Tu region.

This sequence belongs to the EF-Ts family.

The protein resides in the cytoplasm. Associates with the EF-Tu.GDP complex and induces the exchange of GDP to GTP. It remains bound to the aminoacyl-tRNA.EF-Tu.GTP complex up to the GTP hydrolysis stage on the ribosome. The protein is Elongation factor Ts of Pseudomonas entomophila (strain L48).